Consider the following 553-residue polypeptide: Arginine--tRNA ligase (553 aa).

Residues 130–140 carry the 'HIGH' region motif; it reads ANPTGDLHIGH.

Belongs to the class-I aminoacyl-tRNA synthetase family. Monomer.

Its subcellular location is the cytoplasm. It catalyses the reaction tRNA(Arg) + L-arginine + ATP = L-arginyl-tRNA(Arg) + AMP + diphosphate. This Staphylococcus epidermidis (strain ATCC 12228 / FDA PCI 1200) protein is Arginine--tRNA ligase.